The sequence spans 151 residues: Large ribosomal subunit protein uL13 (151 aa).

This sequence belongs to the universal ribosomal protein uL13 family. As to quaternary structure, part of the 50S ribosomal subunit.

Its function is as follows. This protein is one of the early assembly proteins of the 50S ribosomal subunit, although it is not seen to bind rRNA by itself. It is important during the early stages of 50S assembly. In Nostoc sp. (strain PCC 7120 / SAG 25.82 / UTEX 2576), this protein is Large ribosomal subunit protein uL13.